The sequence spans 694 residues: Long-chain-fatty-acid--CoA ligase 4 (694 aa).

A disordered region spans residues 1-21; the sequence is MTEQYSVAVGEAANEHETAPR. ATP is bound at residue 269–280; sequence YTSGSTGTPKGV. The short motif at 527 to 576 is the FACS element; that stretch reads DGWFRTGDIAEWTPKGQVKIIDRKKNLVKTLNGEYIALEKLESIYRSNPY.

It belongs to the ATP-dependent AMP-binding enzyme family. As to quaternary structure, interacts with FAT1. Requires Mg(2+) as cofactor.

The protein localises to the lipid droplet. It catalyses the reaction a long-chain fatty acid + ATP + CoA = a long-chain fatty acyl-CoA + AMP + diphosphate. The catalysed reaction is (9Z)-hexadecenoate + ATP + CoA = (9Z)-hexadecenoyl-CoA + AMP + diphosphate. The enzyme catalyses (9Z)-octadecenoate + ATP + CoA = (9Z)-octadecenoyl-CoA + AMP + diphosphate. It carries out the reaction hexadecanoate + ATP + CoA = hexadecanoyl-CoA + AMP + diphosphate. Activates long-chain fatty acids (LCFA) by esterification of the fatty acids into metabolically active CoA-thioesters for subsequent degradation or incorporation into phospholipids. Also facilitates the transport of LCFAs into the cell, either by active transport or by decreasing the intracellular LCFA concentration. Contributes, with FAA1, to the activation of imported myristate. Also involved in long-chain base (LCB) uptake. In contrast ot LCFA uptake, LCB uptake does not require ATP, suggesting that the enzyme is directly involved in LCB uptake. Involved in the sphingolipid-to-glycerolipid metabolic pathway, converting the sphingolipid metabolite hexadecenoic acid to hexadecenoyl-CoA, which is then further converted to glycerolipids. This is Long-chain-fatty-acid--CoA ligase 4 (FAA4) from Saccharomyces cerevisiae (strain ATCC 204508 / S288c) (Baker's yeast).